Here is a 2974-residue protein sequence, read N- to C-terminus: Mediator of RNA polymerase II transcription subunit 13 (2974 aa).

Basic and acidic residues-rich tracts occupy residues 284 to 299, 340 to 367, 374 to 390, and 624 to 633; these read EKEPENVTEERQKTPE, MFEPDLRQDKPKEETAAEKEKRMAAREV, RREERRREMEKQRRADD, and SREKRKEYQP. Disordered regions lie at residues 284 to 309, 340 to 394, 624 to 654, 677 to 749, 764 to 801, 1032 to 1063, 1099 to 1134, 1140 to 1159, 1281 to 1342, 1416 to 1486, 2052 to 2078, and 2247 to 2309; these read EKEPENVTEERQKTPEAEPPAPPQTT, MFEP…NLED, SREKRKEYQPYHRKRPAKSVKEKKKKAKRKV, FNAW…FADI, LYNPAGGDIEEGDETSNESPDEKTPEGSPNGSPRPKEE, PHGSFDHDSEPEFDEQRTGLGEGTSDQYQDGE, GMLSPPASNEMPKGGPLSVGPASIESQGLNQIYPTP, LQADASQAHSPSIGGKFRST, TLAR…TPTY, QGGL…DATA, ELKKADEHPAPPSTQSENSEGNAATPA, and QDEA…PAGM. A coiled-coil region spans residues 351-396; it reads KEETAAEKEKRMAAREVRRLRRQRREERRREMEKQRRADDNLEDYD. 2 stretches are compositionally biased toward basic residues: residues 634–654 and 677–688; these read YHRKRPAKSVKEKKKKAKRKV and FNAWKQKKKGPP. Residues 689–717 show a composition bias toward basic and acidic residues; sequence PKKDLAKKEAAADKDKDKDKEKDKEKDKD. Basic and acidic residues predominate over residues 1035 to 1048; it reads SFDHDSEPEFDEQR. Polar residues-rich tracts occupy residues 1122–1134 and 1140–1149; these read IESQGLNQIYPTP and LQADASQAHS. Composition is skewed to pro residues over residues 1284–1299 and 1326–1340; these read RPPPGATSPLPPPTPM and PAYPPTPGPYPPTTP. A compositionally biased stretch (polar residues) spans 1443 to 1464; the sequence is IRNTDAPNDPTVSKLQSAVSRN. Residues 1473-1486 show a composition bias toward low complexity; that stretch reads AATSIPTATDDATA. A compositionally biased stretch (polar residues) spans 2064-2073; sequence STQSENSEGN. The stretch at 2220-2301 forms a coiled coil; the sequence is AVEGRLKRQK…EQYPAEESQA (82 aa). Basic and acidic residues-rich tracts occupy residues 2247 to 2258 and 2281 to 2292; these read QDEADKREKMDE and EEKKRNKQKENE. The mediates transcriptional repression stretch occupies residues 2347-2974; it reads WKQRDTRVQN…LYHSVARLLV (628 aa).

This sequence belongs to the Mediator complex subunit 13 family. In terms of assembly, component of the Mediator complex.

The protein resides in the nucleus. Component of the Mediator complex, a coactivator involved in regulated gene transcription of nearly all RNA polymerase II-dependent genes. Mediator functions as a bridge to convey information from gene-specific regulatory proteins to the basal RNA polymerase II transcription machinery. Mediator is recruited to promoters by direct interactions with regulatory proteins and serves as a scaffold for the assembly of a functional preinitiation complex with RNA polymerase II and the general transcription factors. This chain is Mediator of RNA polymerase II transcription subunit 13 (let-19), found in Caenorhabditis briggsae.